A 343-amino-acid chain; its full sequence is NAD-dependent deacetylase sir2E (343 aa).

The region spanning 27 to 300 (YLKNKKEFEF…PLLERQLLYE (274 aa)) is the Deacetylase sirtuin-type domain. H152 functions as the Proton acceptor in the catalytic mechanism. Zn(2+)-binding residues include C160, C165, C200, and C203.

This sequence belongs to the sirtuin family.

It is found in the nucleus. It catalyses the reaction N(6)-acetyl-L-lysyl-[protein] + NAD(+) + H2O = 2''-O-acetyl-ADP-D-ribose + nicotinamide + L-lysyl-[protein]. NAD-dependent deacetylase, which plays an important role in the regulation of transcriptional repression. May play a role in cell cycle. When overexpressed, the cell cycle is accelerated. The sequence is that of NAD-dependent deacetylase sir2E (sir2E) from Dictyostelium discoideum (Social amoeba).